A 303-amino-acid chain; its full sequence is Small ribosomal subunit protein bS1m (303 aa).

Ser-2 carries the N-acetylserine modification. Residues Ser-2 to Met-13 constitute a mitochondrion; not cleaved transit peptide.

Belongs to the bacterial ribosomal protein bS1 family. Component of the mitochondrial small ribosomal subunit (mt-SSU). Mature yeast 74S mitochondrial ribosomes consist of a small (37S) and a large (54S) subunit. The 37S small subunit contains a 15S ribosomal RNA (15S mt-rRNA) and at least 32 different proteins. The 54S large subunit contains a 21S rRNA (21S mt-rRNA) and at least 45 different proteins. This subunit is mutually exclusive with mug178/small ribosomal subunit protein L51-b.

The protein localises to the mitochondrion. Functionally, component of the mitochondrial ribosome (mitoribosome), a dedicated translation machinery responsible for the synthesis of mitochondrial genome-encoded proteins, including at least some of the essential transmembrane subunits of the mitochondrial respiratory chain. The mitoribosomes are attached to the mitochondrial inner membrane and translation products are cotranslationally integrated into the membrane. bS1m functionally interacts with the 5'-UTR of mitochondrial mRNAs. Plays an essential role in mitochondrial translation. This Schizosaccharomyces pombe (strain 972 / ATCC 24843) (Fission yeast) protein is Small ribosomal subunit protein bS1m (mrp51).